The following is a 732-amino-acid chain: MHRIERTFAGRPLVIETGRMAKQAAGSAVVQFGETMVLAAVTVSENQSPLPFFPLTVEYKEKTYAAGKIPGGFIKREGRPHDHEILAARIIDRSIRPLFPEGFKNEVQVFIYVISADQENDADVLALVAASFALNASKIPFLGPIAGVRVGRVQGHWVLNPTFQQLGFSDLELVVAGSKDSIVMVEGGSLEVSEEDVLESLRLSHDGIRELIGMQEELLAKVRVPKMSWVKAEAPEGITTRVKELASGRIREALNQKDKHTRIEAVERTKKELAEGLLVEFPDNAKDIGNLLGDVEYHELRSQVLDTQLRVDGRKKDEVRAISIDTSVLPRAHGSALFTRGQTQALVAATLGTAKDAQRLDSIKEPGEVTRSFMLHYNFPPFSTGEVRPMRGTSRREIGHGNLAERALQGVLPDFADFPYTIRIVSDVLESNGSSSMASVCGGSLSLFDAGVPLKAAVAGVAMGLIKEGERYAILTDILGTEDHLGDMDFKVAGTKDGITSIQMDIKIEGLDIKIMEEALSQAKAGRLHILGEMDKALAAPREDLSKYAPRIVTVQIPVDKIGELIGPKGKNIRGIQDETGAELSVEDDGTVTIAAVGGDSMERAKQMVMAITAEPVVGETYEGTVKTVTAFGAFVEIMPGNEALLHVSEMRWERVEKPEDVVKKGDRVTVKLVDRDERGRLRLSMKALLPKPEGMPDEPPQSERPRRDDGERSGGDRGGRGGRNGGGRDRR.

Residues Asp483 and Asp489 each coordinate Mg(2+). The region spanning Pro550–Val609 is the KH domain. The S1 motif domain maps to Gly619–Lys687. The segment at Leu684–Arg732 is disordered. Residues Gln702 to Gly720 show a composition bias toward basic and acidic residues.

This sequence belongs to the polyribonucleotide nucleotidyltransferase family. Mg(2+) is required as a cofactor.

It is found in the cytoplasm. The catalysed reaction is RNA(n+1) + phosphate = RNA(n) + a ribonucleoside 5'-diphosphate. Its function is as follows. Involved in mRNA degradation. Catalyzes the phosphorolysis of single-stranded polyribonucleotides processively in the 3'- to 5'-direction. This is Polyribonucleotide nucleotidyltransferase from Gemmatimonas aurantiaca (strain DSM 14586 / JCM 11422 / NBRC 100505 / T-27).